The primary structure comprises 169 residues: NAD(P)H-quinone oxidoreductase subunit J, chloroplastic (169 aa).

It belongs to the complex I 30 kDa subunit family. As to quaternary structure, NDH is composed of at least 16 different subunits, 5 of which are encoded in the nucleus.

The protein localises to the plastid. It is found in the chloroplast thylakoid membrane. The enzyme catalyses a plastoquinone + NADH + (n+1) H(+)(in) = a plastoquinol + NAD(+) + n H(+)(out). It catalyses the reaction a plastoquinone + NADPH + (n+1) H(+)(in) = a plastoquinol + NADP(+) + n H(+)(out). Functionally, NDH shuttles electrons from NAD(P)H:plastoquinone, via FMN and iron-sulfur (Fe-S) centers, to quinones in the photosynthetic chain and possibly in a chloroplast respiratory chain. The immediate electron acceptor for the enzyme in this species is believed to be plastoquinone. Couples the redox reaction to proton translocation, and thus conserves the redox energy in a proton gradient. This Marchantia polymorpha (Common liverwort) protein is NAD(P)H-quinone oxidoreductase subunit J, chloroplastic.